The primary structure comprises 666 residues: tRNA 5-methylaminomethyl-2-thiouridine biosynthesis bifunctional protein MnmC (666 aa).

The tRNA (mnm(5)s(2)U34)-methyltransferase stretch occupies residues 1–245 (MKQYAIQPAT…KREMLCGVME (245 aa)). The FAD-dependent cmnm(5)s(2)U34 oxidoreductase stretch occupies residues 270–666 (IGGGIASALL…RKLLKGKAVK (397 aa)).

This sequence in the N-terminal section; belongs to the methyltransferase superfamily. tRNA (mnm(5)s(2)U34)-methyltransferase family. The protein in the C-terminal section; belongs to the DAO family. Requires FAD as cofactor.

It is found in the cytoplasm. The catalysed reaction is 5-aminomethyl-2-thiouridine(34) in tRNA + S-adenosyl-L-methionine = 5-methylaminomethyl-2-thiouridine(34) in tRNA + S-adenosyl-L-homocysteine + H(+). Functionally, catalyzes the last two steps in the biosynthesis of 5-methylaminomethyl-2-thiouridine (mnm(5)s(2)U) at the wobble position (U34) in tRNA. Catalyzes the FAD-dependent demodification of cmnm(5)s(2)U34 to nm(5)s(2)U34, followed by the transfer of a methyl group from S-adenosyl-L-methionine to nm(5)s(2)U34, to form mnm(5)s(2)U34. This chain is tRNA 5-methylaminomethyl-2-thiouridine biosynthesis bifunctional protein MnmC, found in Salmonella arizonae (strain ATCC BAA-731 / CDC346-86 / RSK2980).